The primary structure comprises 60 residues: Large ribosomal subunit protein bL32 (60 aa).

Basic residues predominate over residues 1-19; that stretch reads MAVPKRRTSKRRKRARNTH. Residues 1–20 form a disordered region; it reads MAVPKRRTSKRRKRARNTHK.

The protein belongs to the bacterial ribosomal protein bL32 family.

This chain is Large ribosomal subunit protein bL32, found in Gemmatimonas aurantiaca (strain DSM 14586 / JCM 11422 / NBRC 100505 / T-27).